The chain runs to 181 residues: Probable GTP-binding protein EngB (181 aa).

Residues 18–181 (PKNEICFVGR…LQDLVNNLFN (164 aa)) form the EngB-type G domain. Residues 26 to 33 (GRSNVGKS), 52 to 56 (GKTKL), 70 to 73 (DLPG), 137 to 140 (TKRD), and 164 to 166 (VSI) contribute to the GTP site. Residues serine 33 and threonine 54 each contribute to the Mg(2+) site.

It belongs to the TRAFAC class TrmE-Era-EngA-EngB-Septin-like GTPase superfamily. EngB GTPase family. Mg(2+) is required as a cofactor.

Its function is as follows. Necessary for normal cell division and for the maintenance of normal septation. The polypeptide is Probable GTP-binding protein EngB (Mycoplasma mobile (strain ATCC 43663 / 163K / NCTC 11711) (Mesomycoplasma mobile)).